A 230-amino-acid chain; its full sequence is Ropporin-1-like protein (230 aa).

The RIIa domain occupies 17-46 (PELPDILKQFTKAAIRTQPADVLRWSAGYF).

This sequence belongs to the ropporin family. In terms of assembly, component of the axonemal radial spoke complex 1 (RS1), at least composed of spoke head proteins RSPH1, RSPH3, RSPH9 and the cilia-specific component RSPH4A or sperm-specific component RSPH6A, spoke stalk proteins RSPH14, DNAJB13, DYDC1, ROPN1L and NME5, and the anchor protein IQUB. Interacts with FSCB; the interaction increases upon spermatozoa capacitation conditions. May interact with AKAP3. Interacts with CFAP61. Post-translationally, sumoylated, sumoylation decreases upon spermatozoa capacitation conditions.

The protein resides in the cell projection. The protein localises to the cilium. It localises to the flagellum. In terms of biological role, functions as part of axonemal radial spoke complexes that play an important part in the motility of sperm and cilia. Important for male fertility. With ROPN1, involved in fibrous sheath integrity and sperm motility, plays a role in PKA-dependent signaling processes required for spermatozoa capacitation. This Homo sapiens (Human) protein is Ropporin-1-like protein (ROPN1L).